The primary structure comprises 129 residues: SOSS complex subunit C homolog (129 aa).

Residues 105–129 (RLEPLPSPATTPTTPNAPPSHSISK) form a disordered region.

The protein belongs to the SOSS-C family.

In Drosophila simulans (Fruit fly), this protein is SOSS complex subunit C homolog.